Here is a 745-residue protein sequence, read N- to C-terminus: Protein PHOX1 (745 aa).

The segment covering 1–10 (MGKPTGKKKN) has biased composition (basic residues). Residues 1-37 (MGKPTGKKKNNNYTEMPPTESSTTGGGKTGKSFDRSA) are disordered. 3 TPR repeats span residues 52-85 (ALEL…LPRD), 90-125 (AYLR…SPRF), and 126-159 (SKAL…EPEN). Residues 280 to 359 (TRTVKLVHGD…GSFRLYIAEV (80 aa)) form the PB1 domain. 4 TPR repeats span residues 406-441 (EHWI…YTEA), 443-472 (EDIV…AMFN), 494-528 (ETIL…KSDF), and 553-586 (GEVD…WEEM).

In terms of assembly, interacts with myosin XI-1 and XI-K.

It localises to the cytoplasmic vesicle membrane. Functionally, carboxylate clamp type tetratricopeptide repeat protein that may act as a potential Hsp90/Hsp70 co-chaperone. Contributes to polar growth of root hairs. The sequence is that of Protein PHOX1 from Arabidopsis thaliana (Mouse-ear cress).